Reading from the N-terminus, the 144-residue chain is 3-hydroxyacyl-[acyl-carrier-protein] dehydratase FabZ (144 aa).

Residue His48 is part of the active site.

Belongs to the thioester dehydratase family. FabZ subfamily.

Its subcellular location is the cytoplasm. It carries out the reaction a (3R)-hydroxyacyl-[ACP] = a (2E)-enoyl-[ACP] + H2O. In terms of biological role, involved in unsaturated fatty acids biosynthesis. Catalyzes the dehydration of short chain beta-hydroxyacyl-ACPs and long chain saturated and unsaturated beta-hydroxyacyl-ACPs. This is 3-hydroxyacyl-[acyl-carrier-protein] dehydratase FabZ from Listeria monocytogenes serotype 4b (strain CLIP80459).